The primary structure comprises 477 residues: UTP--glucose-1-phosphate uridylyltransferase (477 aa).

A2 carries the post-translational modification N-acetylalanine. Residues 92-95 (LNGG), K106, Q169, and G198 each bind UTP. 94 to 95 (GG) provides a ligand contact to substrate. Residues H199 and 227 to 229 (NSD) contribute to the substrate site. D229 and K367 together coordinate UTP.

Belongs to the UDPGP type 1 family. In terms of assembly, monomer. Mg(2+) is required as a cofactor.

It localises to the cytoplasm. It catalyses the reaction alpha-D-glucose 1-phosphate + UTP + H(+) = UDP-alpha-D-glucose + diphosphate. Its activity is regulated as follows. Inhibition by uncomplexed, free UTP. Plays a central role as a glucosyl donor in cellular metabolic pathways. In Solanum tuberosum (Potato), this protein is UTP--glucose-1-phosphate uridylyltransferase.